Here is a 285-residue protein sequence, read N- to C-terminus: Hydrolase in pqqF 5'region (285 aa).

Residues Met-22–Arg-258 form the CN hydrolase domain. The active-site Proton acceptor is the Glu-60. The Proton donor role is filled by Lys-131. Cys-165 (nucleophile) is an active-site residue.

Belongs to the carbon-nitrogen hydrolase superfamily. NIT1/NIT2 family.

The chain is Hydrolase in pqqF 5'region from Pseudomonas protegens (strain DSM 19095 / LMG 27888 / CFBP 6595 / CHA0).